The primary structure comprises 524 residues: GMP synthase [glutamine-hydrolyzing] (524 aa).

The Glutamine amidotransferase type-1 domain occupies 12–201 (TILVLDFGSQ…AVDICKASQS (190 aa)). Residue Cys-88 is the Nucleophile of the active site. Active-site residues include His-175 and Glu-177. The GMPS ATP-PPase domain maps to 202–399 (WNMENFIDTE…LGISHELVWR (198 aa)). 230 to 236 (SGGVDST) provides a ligand contact to ATP. XMP contacts are provided by Arg-303, Asp-461, Lys-516, and Glu-522.

Homodimer. The cofactor is Mg(2+).

The protein localises to the cytoplasm. It is found in the cytosol. The enzyme catalyses XMP + L-glutamine + ATP + H2O = GMP + L-glutamate + AMP + diphosphate + 2 H(+). It participates in purine metabolism; GMP biosynthesis; GMP from XMP (L-Gln route): step 1/1. Its function is as follows. Catalyzes the conversion of xanthine monophosphate (XMP) to GMP in the presence of glutamine and ATP through an adenyl-XMP intermediate. The chain is GMP synthase [glutamine-hydrolyzing] (GUA1) from Kluyveromyces lactis (strain ATCC 8585 / CBS 2359 / DSM 70799 / NBRC 1267 / NRRL Y-1140 / WM37) (Yeast).